The sequence spans 228 residues: 5'-methylthioadenosine/S-adenosylhomocysteine nucleosidase (228 aa).

Glu-11 (proton acceptor) is an active-site residue. Substrate-binding positions include Gly-77, Ile-151, and 172 to 173 (ME). The active-site Proton donor is Asp-196.

Belongs to the PNP/UDP phosphorylase family. MtnN subfamily.

The catalysed reaction is S-adenosyl-L-homocysteine + H2O = S-(5-deoxy-D-ribos-5-yl)-L-homocysteine + adenine. The enzyme catalyses S-methyl-5'-thioadenosine + H2O = 5-(methylsulfanyl)-D-ribose + adenine. It catalyses the reaction 5'-deoxyadenosine + H2O = 5-deoxy-D-ribose + adenine. The protein operates within amino-acid biosynthesis; L-methionine biosynthesis via salvage pathway; S-methyl-5-thio-alpha-D-ribose 1-phosphate from S-methyl-5'-thioadenosine (hydrolase route): step 1/2. Catalyzes the irreversible cleavage of the glycosidic bond in both 5'-methylthioadenosine (MTA) and S-adenosylhomocysteine (SAH/AdoHcy) to adenine and the corresponding thioribose, 5'-methylthioribose and S-ribosylhomocysteine, respectively. Also cleaves 5'-deoxyadenosine, a toxic by-product of radical S-adenosylmethionine (SAM) enzymes, into 5-deoxyribose and adenine. This chain is 5'-methylthioadenosine/S-adenosylhomocysteine nucleosidase, found in Staphylococcus haemolyticus (strain JCSC1435).